A 1201-amino-acid chain; its full sequence is ATP-dependent helicase/deoxyribonuclease subunit B (1201 aa).

Belongs to the helicase family. AddB/RexB type 2 subfamily. In terms of assembly, heterodimer of AddA and RexB. It depends on Mg(2+) as a cofactor.

The heterodimer acts as both an ATP-dependent DNA helicase and an ATP-dependent, dual-direction single-stranded exonuclease. Recognizes the chi site generating a DNA molecule suitable for the initiation of homologous recombination. This subunit has 5' -&gt; 3' nuclease activity but not helicase activity. The sequence is that of ATP-dependent helicase/deoxyribonuclease subunit B from Levilactobacillus brevis (strain ATCC 367 / BCRC 12310 / CIP 105137 / JCM 1170 / LMG 11437 / NCIMB 947 / NCTC 947) (Lactobacillus brevis).